Consider the following 184-residue polypeptide: Probable RNA 2'-phosphotransferase (184 aa).

It belongs to the KptA/TPT1 family.

In terms of biological role, removes the 2'-phosphate from RNA via an intermediate in which the phosphate is ADP-ribosylated by NAD followed by a presumed transesterification to release the RNA and generate ADP-ribose 1''-2''-cyclic phosphate (APPR&gt;P). May function as an ADP-ribosylase. The sequence is that of Probable RNA 2'-phosphotransferase from Rhizobium johnstonii (strain DSM 114642 / LMG 32736 / 3841) (Rhizobium leguminosarum bv. viciae).